The following is a 130-amino-acid chain: Calcium-binding protein KRP1 (130 aa).

An EF-hand domain is found at 72–107 (LTDEDVRCMIKEGDFDCDGALNQMEFCVLMFRLSPD). 4 residues coordinate Ca(2+): Asp-85, Asp-87, Asp-89, and Glu-96.

Its function is as follows. Potential calcium sensor that binds calcium in vitro. The sequence is that of Calcium-binding protein KRP1 from Arabidopsis thaliana (Mouse-ear cress).